Reading from the N-terminus, the 434-residue chain is Glutamyl-tRNA reductase (434 aa).

Substrate contacts are provided by residues 49 to 52 (TCNR), Ser114, 119 to 121 (EPQ), and Gln125. Cys50 acts as the Nucleophile in catalysis. Residue 199–204 (GAGETI) coordinates NADP(+).

This sequence belongs to the glutamyl-tRNA reductase family. Homodimer.

It carries out the reaction (S)-4-amino-5-oxopentanoate + tRNA(Glu) + NADP(+) = L-glutamyl-tRNA(Glu) + NADPH + H(+). It functions in the pathway porphyrin-containing compound metabolism; protoporphyrin-IX biosynthesis; 5-aminolevulinate from L-glutamyl-tRNA(Glu): step 1/2. Its function is as follows. Catalyzes the NADPH-dependent reduction of glutamyl-tRNA(Glu) to glutamate 1-semialdehyde (GSA). This is Glutamyl-tRNA reductase from Pasteurella multocida (strain Pm70).